The chain runs to 127 residues: Glycine cleavage system H protein (127 aa).

The region spanning 24–105 (TALAGITDFA…YGEGWLVKIK (82 aa)) is the Lipoyl-binding domain. At Lys-65 the chain carries N6-lipoyllysine.

Belongs to the GcvH family. The glycine cleavage system is composed of four proteins: P, T, L and H. Requires (R)-lipoate as cofactor.

In terms of biological role, the glycine cleavage system catalyzes the degradation of glycine. The H protein shuttles the methylamine group of glycine from the P protein to the T protein. The protein is Glycine cleavage system H protein of Chlorobium phaeobacteroides (strain DSM 266 / SMG 266 / 2430).